The following is a 652-amino-acid chain: MFGVYRVFVLLVFVSQLCNGFYLPGSYMHTYSDGDSIFAKVNSLTSIETELPFSYYSLPYCQPLEGIKKSAENLGELLMGDQIDNSAYRFRMRTNESLYLCTTSPLNEHEVKLLKQRTRELYQVNMILDNLPALRFAKQNGVTIQWTGYPVGYSPPNSNDDYIINHLKFKVLVHEYEGNVMEVIGTGEEGMGVISEADKKKALGYEIVGFEVVPCSVKYDAEKMTKLHMYDPVPSVNCPLELDKAQIIKEHERITFTYEVEFVKSETRWPSRWDAYLKMEGARVHWFSILNSLMVIFFLAGIVFVIFLRTVRRDLTKYEELDKEAQAQMNEELSGWKLVVGDVFREPEMSKLLCIMVGDGVRITGMAVVTIVFAALGFMSPASRGMLLTGMIILYLFLGIVAGYAGVRLWRTVKGTSEGWRSLSWSIACFFPGIAFVILTVLNFLLWSSNSTGAIPISLYFELLALWFCISVPLTLFGGFLGTRAEAIQFPVRTNQIPREIPERKYPSWLLVLGAGTLPFGTLFIELFFIFSSIWLGRFYYVFGFLLIVLLLLVVVCAEVSVVLTYMHLCVEDWRWWWKAFYASGSVALYVFAYSINYLVFDLQSLSGPVSAMLYIGYSLLMAIAIMLATGTIGFLTSFYFVHYLFSSVKID.

Positions 1–20 (MFGVYRVFVLLVFVSQLCNG) are cleaved as a signal peptide. The Lumenal segment spans residues 21–286 (FYLPGSYMHT…LKMEGARVHW (266 aa)). A helical membrane pass occupies residues 287-307 (FSILNSLMVIFFLAGIVFVIF). The Cytoplasmic portion of the chain corresponds to 308–362 (LRTVRRDLTKYEELDKEAQAQMNEELSGWKLVVGDVFREPEMSKLLCIMVGDGVR). Residues 363–383 (ITGMAVVTIVFAALGFMSPAS) form a helical membrane-spanning segment. The Lumenal segment spans residues 384-386 (RGM). The helical transmembrane segment at 387–407 (LLTGMIILYLFLGIVAGYAGV) threads the bilayer. Residues 408–426 (RLWRTVKGTSEGWRSLSWS) lie on the Cytoplasmic side of the membrane. Residues 427-447 (IACFFPGIAFVILTVLNFLLW) form a helical membrane-spanning segment. The Lumenal segment spans residues 448–460 (SSNSTGAIPISLY). Residues 461–481 (FELLALWFCISVPLTLFGGFL) traverse the membrane as a helical segment. The Cytoplasmic segment spans residues 482–510 (GTRAEAIQFPVRTNQIPREIPERKYPSWL). The helical transmembrane segment at 511–531 (LVLGAGTLPFGTLFIELFFIF) threads the bilayer. Topologically, residues 532–541 (SSIWLGRFYY) are lumenal. Residues 542 to 562 (VFGFLLIVLLLLVVVCAEVSV) form a helical membrane-spanning segment. At 563–580 (VLTYMHLCVEDWRWWWKA) the chain is on the cytoplasmic side. A helical membrane pass occupies residues 581–601 (FYASGSVALYVFAYSINYLVF). Over 602 to 613 (DLQSLSGPVSAM) the chain is Lumenal. A helical transmembrane segment spans residues 614–634 (LYIGYSLLMAIAIMLATGTIG). The Cytoplasmic segment spans residues 635–652 (FLTSFYFVHYLFSSVKID). The Endoplasmic reticulum export signal signature appears at 641–646 (FVHYLF). Residues 650-652 (KID) carry the Golgi retention signal motif.

This sequence belongs to the nonaspanin (TM9SF) (TC 9.A.2) family.

The protein resides in the endosome membrane. It is found in the golgi apparatus membrane. The protein is Transmembrane 9 superfamily member 12 of Arabidopsis thaliana (Mouse-ear cress).